The primary structure comprises 363 residues: Inositol-3-phosphate synthase (363 aa).

An Isoglutamyl lysine isopeptide (Lys-Gln) (interchain with Q-Cter in protein Pup) cross-link involves residue K65. 6 residues coordinate NAD(+): D70, A129, Y149, S192, D227, and K240.

The protein belongs to the myo-inositol 1-phosphate synthase family. Requires NAD(+) as cofactor. Post-translationally, pupylated at Lys-65 by the prokaryotic ubiquitin-like protein Pup, which leads to its degradation by the proteasome.

The enzyme catalyses D-glucose 6-phosphate = 1D-myo-inositol 3-phosphate. Its function is as follows. Key enzyme in myo-inositol biosynthesis pathway that catalyzes the conversion of glucose 6-phosphate to 1D-myo-inositol 3-phosphate in a NAD-dependent manner. The polypeptide is Inositol-3-phosphate synthase (ino1) (Mycolicibacterium smegmatis (strain ATCC 700084 / mc(2)155) (Mycobacterium smegmatis)).